We begin with the raw amino-acid sequence, 62 residues long: Photosystem II reaction center protein Z (62 aa).

The next 2 helical transmembrane spans lie at 8–28 (LVFILVIFSTLLVVGIPVTFA) and 41–61 (YTGAGIWTGLVLITGLVNSFI).

The protein belongs to the PsbZ family. PSII is composed of 1 copy each of membrane proteins PsbA, PsbB, PsbC, PsbD, PsbE, PsbF, PsbH, PsbI, PsbJ, PsbK, PsbL, PsbM, PsbT, sbX, PsbY, PsbZ, Psb30/Ycf12, at least 3 peripheral proteins of the oxygen-evolving complex and a large number of cofactors. It forms dimeric complexes.

It localises to the plastid. The protein localises to the chloroplast thylakoid membrane. May control the interaction of photosystem II (PSII) cores with the light-harvesting antenna, regulates electron flow through the 2 photosystem reaction centers. PSII is a light-driven water plastoquinone oxidoreductase, using light energy to abstract electrons from H(2)O, generating a proton gradient subsequently used for ATP formation. The protein is Photosystem II reaction center protein Z of Gracilaria tenuistipitata var. liui (Red alga).